Here is a 248-residue protein sequence, read N- to C-terminus: MNQLTAYTLRLGDNCLVLSQRLGEWCGHAPELEIDLALANIGLDLLGQARNFLSYAAELAGEGDEDTLAFTRDERQFSNLLLVEQPNGNFADTIARQYFIDAWHVALFTRLMESRDPQLAAISAKAIKEARYHLRFSRGWLERLGNGTDVSGQKMQQAINKLWRFTAELFDADEIDIALSEEGIAVDPRTLRAAWEAEVFAGINEATLNVPQEQAYRTGGKKGLHTEHLGPMLAEMQYLQRVLPGQQW.

Residues 76–79 (QFSN) and 177–179 (IAL) contribute to the substrate site.

As to quaternary structure, forms a stable heterotetramer (dimer of heterodimers) with PaaA and a stable heterodimer with PaaB.

It functions in the pathway aromatic compound metabolism; phenylacetate degradation. Component of 1,2-phenylacetyl-CoA epoxidase multicomponent enzyme system which catalyzes the reduction of phenylacetyl-CoA (PA-CoA) to form 1,2-epoxyphenylacetyl-CoA. The subunit C may be essential for structural integrity of the alpha subunit. This Escherichia coli (strain K12) protein is 1,2-phenylacetyl-CoA epoxidase, subunit C (paaC).